The primary structure comprises 53 residues: UPF0391 membrane protein Bmul_5473/BMULJ_06024 (53 aa).

Helical transmembrane passes span 5–25 (ALIF…GIAA) and 30–50 (IAKI…LLGV).

The protein belongs to the UPF0391 family.

It is found in the cell membrane. This chain is UPF0391 membrane protein Bmul_5473/BMULJ_06024, found in Burkholderia multivorans (strain ATCC 17616 / 249).